The chain runs to 360 residues: UDP-N-acetylglucosamine--N-acetylmuramyl-(pentapeptide) pyrophosphoryl-undecaprenol N-acetylglucosamine transferase (360 aa).

UDP-N-acetyl-alpha-D-glucosamine contacts are provided by Ser198 and Gln289.

It belongs to the glycosyltransferase 28 family. MurG subfamily.

Its subcellular location is the cell membrane. The enzyme catalyses Mur2Ac(oyl-L-Ala-gamma-D-Glu-L-Lys-D-Ala-D-Ala)-di-trans,octa-cis-undecaprenyl diphosphate + UDP-N-acetyl-alpha-D-glucosamine = beta-D-GlcNAc-(1-&gt;4)-Mur2Ac(oyl-L-Ala-gamma-D-Glu-L-Lys-D-Ala-D-Ala)-di-trans,octa-cis-undecaprenyl diphosphate + UDP + H(+). It participates in cell wall biogenesis; peptidoglycan biosynthesis. Its function is as follows. Cell wall formation. Catalyzes the transfer of a GlcNAc subunit on undecaprenyl-pyrophosphoryl-MurNAc-pentapeptide (lipid intermediate I) to form undecaprenyl-pyrophosphoryl-MurNAc-(pentapeptide)GlcNAc (lipid intermediate II). This Streptococcus pyogenes serotype M3 (strain SSI-1) protein is UDP-N-acetylglucosamine--N-acetylmuramyl-(pentapeptide) pyrophosphoryl-undecaprenol N-acetylglucosamine transferase.